The sequence spans 298 residues: Protoheme IX farnesyltransferase (298 aa).

9 helical membrane passes run 26 to 46 (VVSL…PGVV), 52 to 72 (IFAT…NCLV), 99 to 119 (FVFL…LVNP), 120 to 140 (LTMW…TVIL), 148 to 168 (IVIG…AVTG), 174 to 194 (ALLL…ALAL), 219 to 239 (LHVL…YATQ), 241 to 261 (SGLI…YYAV), and 276 to 296 (FRYS…DHYI).

Belongs to the UbiA prenyltransferase family. Protoheme IX farnesyltransferase subfamily.

It localises to the cell inner membrane. The catalysed reaction is heme b + (2E,6E)-farnesyl diphosphate + H2O = Fe(II)-heme o + diphosphate. It functions in the pathway porphyrin-containing compound metabolism; heme O biosynthesis; heme O from protoheme: step 1/1. Functionally, converts heme B (protoheme IX) to heme O by substitution of the vinyl group on carbon 2 of heme B porphyrin ring with a hydroxyethyl farnesyl side group. The protein is Protoheme IX farnesyltransferase of Nitrosospira multiformis (strain ATCC 25196 / NCIMB 11849 / C 71).